The primary structure comprises 391 residues: Mannonate dehydratase (391 aa).

The tract at residues 334-359 is disordered; that stretch reads ERRRERDGGPRLPLRPDHGHHLLDDL.

The protein belongs to the mannonate dehydratase family. Fe(2+) is required as a cofactor. The cofactor is Mn(2+).

It catalyses the reaction D-mannonate = 2-dehydro-3-deoxy-D-gluconate + H2O. It participates in carbohydrate metabolism; pentose and glucuronate interconversion. In terms of biological role, catalyzes the dehydration of D-mannonate. The chain is Mannonate dehydratase from Chromohalobacter salexigens (strain ATCC BAA-138 / DSM 3043 / CIP 106854 / NCIMB 13768 / 1H11).